Here is a 42-residue protein sequence, read N- to C-terminus: Photosystem II reaction center protein J (42 aa).

A helical membrane pass occupies residues 10–30 (IPLWLVGTVAGILVLGLVGLF).

Belongs to the PsbJ family. In terms of assembly, PSII is composed of 1 copy each of membrane proteins PsbA, PsbB, PsbC, PsbD, PsbE, PsbF, PsbH, PsbI, PsbJ, PsbK, PsbL, PsbM, PsbT, PsbX, PsbY, PsbZ, Psb30/Ycf12, at least 3 peripheral proteins of the oxygen-evolving complex and a large number of cofactors. It forms dimeric complexes.

The protein localises to the plastid. The protein resides in the chloroplast thylakoid membrane. Its function is as follows. One of the components of the core complex of photosystem II (PSII). PSII is a light-driven water:plastoquinone oxidoreductase that uses light energy to abstract electrons from H(2)O, generating O(2) and a proton gradient subsequently used for ATP formation. It consists of a core antenna complex that captures photons, and an electron transfer chain that converts photonic excitation into a charge separation. The polypeptide is Photosystem II reaction center protein J (Staurastrum punctulatum (Green alga)).